Consider the following 294-residue polypeptide: Lipoprotein NlpI (294 aa).

An N-terminal signal peptide occupies residues 1-18 (MKPFLRWCFVATALTLAG). A lipid anchor (N-palmitoyl cysteine) is attached at Cys-19. The S-diacylglycerol cysteine moiety is linked to residue Cys-19. TPR repeat units follow at residues 62–95 (AQLL…RPDM), 96–129 (PEVF…DPTY), and 234–267 (SETN…NVHN).

Homodimer.

It localises to the cell membrane. May be involved in cell division. May play a role in bacterial septation or regulation of cell wall degradation during cell division. This is Lipoprotein NlpI (nlpI) from Escherichia coli O157:H7.